The primary structure comprises 512 residues: 3-ketoacyl-CoA synthase 9 (512 aa).

2 helical membrane-spanning segments follow: residues 44–64 and 83–103; these read LITHLFKLCLVPLMAVLVTEI and LVAFIFLSALAIFGSTVYIMS. The FAE domain maps to 100–389; that stretch reads YIMSRPRSVY…FFMTLVTKKL (290 aa). Catalysis depends on residues Cys244, His323, His407, His411, His440, and Asn444.

The protein belongs to the thiolase-like superfamily. Chalcone/stilbene synthases family. Expressed in seedlings, stems, leaves, flowers and siliques. Expressed in roots, leaves, and stems, including epidermis, silique walls, sepals, the upper portion of the styles, and seed coats, but not in developing embryos.

The protein localises to the endoplasmic reticulum membrane. It carries out the reaction a very-long-chain acyl-CoA + malonyl-CoA + H(+) = a very-long-chain 3-oxoacyl-CoA + CO2 + CoA. Its pathway is lipid metabolism; fatty acid biosynthesis. In terms of biological role, involved in the elongation of C22 to C24 fatty acids, which are precursors for the biosynthesis of cuticular waxes, aliphatic suberins, and membrane lipids, including sphingolipids and phospholipids. The chain is 3-ketoacyl-CoA synthase 9 from Arabidopsis thaliana (Mouse-ear cress).